The chain runs to 127 residues: Protein translocase subunit SecE (127 aa).

3 helical membrane-spanning segments follow: residues 16-36 (AMKW…NYLY), 41-61 (LPLR…VALL), and 96-116 (IVAA…GILV).

The protein belongs to the SecE/SEC61-gamma family. Component of the Sec protein translocase complex. Heterotrimer consisting of SecY, SecE and SecG subunits. The heterotrimers can form oligomers, although 1 heterotrimer is thought to be able to translocate proteins. Interacts with the ribosome. Interacts with SecDF, and other proteins may be involved. Interacts with SecA.

The protein resides in the cell inner membrane. Its function is as follows. Essential subunit of the Sec protein translocation channel SecYEG. Clamps together the 2 halves of SecY. May contact the channel plug during translocation. This is Protein translocase subunit SecE from Salmonella typhi.